A 99-amino-acid polypeptide reads, in one-letter code: Integration host factor subunit alpha (99 aa).

This sequence belongs to the bacterial histone-like protein family. Heterodimer of an alpha and a beta chain.

Its function is as follows. This protein is one of the two subunits of integration host factor, a specific DNA-binding protein that functions in genetic recombination as well as in transcriptional and translational control. The protein is Integration host factor subunit alpha (ihfA) of Mannheimia haemolytica (Pasteurella haemolytica).